Reading from the N-terminus, the 437-residue chain is MSNRGDRISSLPDELLCQILSNLPTKNAVTTSILSTRWRSIWLSTPVLDIDIDAFDDATTFVSFASRFLEFSKDSCLHKFKLSVERDDVDMCTIMPWIQDAVNRRIQHLEVDCRFSFHFEAVYLTLYLSETLVSLRLHFVTLHRYEFVSLPNLKVMHLEENIYYCLETLENFISSCPVLEDLTVVRIVDIITEKILRVRSRSLNSLKLVLDSSNGWFIDDIDEWKVIIDAPRLAYLSLKDDQSASFVISNLGSSAKADIKVSFNVNDIWDLPVTFERSNVGKLLTGLSSIRDLTISGTTLMIICHYLKHEPMPQFCNMVRLNARFYDCDLEMLPCVLESCPNLKSLVLGLLSSAETEQQSRVSSVPPCFLSSLEFVEIRSRLCRKRYVMKVARYFAKNSVMLKKFVYVGRVSIQEEDLLALLWRYSICEIEVRGLRR.

The F-box domain occupies 5 to 51; sequence GDRISSLPDELLCQILSNLPTKNAVTTSILSTRWRSIWLSTPVLDID. LRR repeat units follow at residues 86 to 113, 134 to 160, 161 to 186, 187 to 210, 215 to 240, 272 to 297, and 322 to 350; these read RDDV…EVDC, SLRL…HLEE, NIYY…TVVR, IVDI…KLVL, GWFI…SLKD, PVTF…TISG, and NARF…VLGL. In terms of domain architecture, FBD spans 361–406; sequence RVSSVPPCFLSSLEFVEIRSRLCRKRYVMKVARYFAKNSVMLKKFV.

This is F-box/FBD/LRR-repeat protein At5g22700 from Arabidopsis thaliana (Mouse-ear cress).